The chain runs to 85 residues: Probable [Fe-S]-dependent transcriptional repressor (85 aa).

Positions 56, 61, 64, and 71 each coordinate iron-sulfur cluster.

The protein belongs to the FeoC family.

In terms of biological role, may function as a transcriptional regulator that controls feoABC expression. In Yersinia pseudotuberculosis serotype O:1b (strain IP 31758), this protein is Probable [Fe-S]-dependent transcriptional repressor.